Consider the following 337-residue polypeptide: MSENVPDHQSTNGFSSSDFFVPEEEAGKKVVLSKLVTLMRKLSEQGIDAQNCPPGVRSCLICPKCEVGDSGEKSLTLYIYPDGSSAKWTCRRKCGLKGVLQVDGKLVSKDPIGKVERKITVESIKLEPLCDEIQDFFAARAISGKTLERNRVMQKRIDDEIVIAFTYWQRGELVSCKYRSLTKKFVQERNTRKILYGLDDIEETSEIIIVEGEPDKLAMEEAGFFNCVSVPDGAPETVSSKEIPSESKDTAFKYIWNCNDYLKKASRIVIATDGDGPGQALAEELARRLGKERCWLVKWPKKSEDEHFKDANEVLMSKGPHLLKEAILNAEPYPLKS.

Positions 205–304 constitute a Toprim domain; it reads SEIIIVEGEP…WLVKWPKKSE (100 aa). Residues Glu211, Asp273, and Asp275 each contribute to the Mg(2+) site.

Mg(2+) is required as a cofactor.

May act as a DNA primase. The polypeptide is Primase homolog protein (Arabidopsis thaliana (Mouse-ear cress)).